We begin with the raw amino-acid sequence, 186 residues long: dTTP/UTP pyrophosphatase (186 aa).

The Proton acceptor role is filled by D66.

The protein belongs to the Maf family. YhdE subfamily. A divalent metal cation serves as cofactor.

The protein localises to the cytoplasm. The enzyme catalyses dTTP + H2O = dTMP + diphosphate + H(+). It carries out the reaction UTP + H2O = UMP + diphosphate + H(+). Nucleoside triphosphate pyrophosphatase that hydrolyzes dTTP and UTP. May have a dual role in cell division arrest and in preventing the incorporation of modified nucleotides into cellular nucleic acids. The polypeptide is dTTP/UTP pyrophosphatase (Pyrococcus horikoshii (strain ATCC 700860 / DSM 12428 / JCM 9974 / NBRC 100139 / OT-3)).